The primary structure comprises 299 residues: Heat stress transcription factor B-2a (299 aa).

A DNA-binding region spans residues 21-115 (PTPFLTKTFN…LLREIQRRKI (95 aa)). Residues 119–157 (HQTVVAPSSEQRNQTMVVSPSNSGEDNNNNQVMSSSPSS) are disordered. The segment at 166 to 211 (TGNGGLSVELLEENEKLRSQNIQLNRELTQMKSICDNIYSLMSNYV) is hydrophobic repeat HR-A/B. The Nuclear localization signal signature appears at 261 to 264 (KRTR).

It belongs to the HSF family. Class B subfamily. As to quaternary structure, homotrimer. Post-translationally, exhibits temperature-dependent phosphorylation.

It is found in the nucleus. Functionally, transcriptional regulator that specifically binds DNA sequence 5'-AGAAnnTTCT-3' known as heat shock promoter elements (HSE). The sequence is that of Heat stress transcription factor B-2a (HSFB2A) from Arabidopsis thaliana (Mouse-ear cress).